The chain runs to 425 residues: Serine--tRNA ligase (425 aa).

Position 229–231 (229–231 (TAE)) interacts with L-serine. 260 to 262 (RSE) is an ATP binding site. Glutamate 283 contributes to the L-serine binding site. ATP is bound at residue 347–350 (EISS). Serine 384 contributes to the L-serine binding site.

Belongs to the class-II aminoacyl-tRNA synthetase family. Type-1 seryl-tRNA synthetase subfamily. Homodimer. The tRNA molecule binds across the dimer.

The protein localises to the cytoplasm. The enzyme catalyses tRNA(Ser) + L-serine + ATP = L-seryl-tRNA(Ser) + AMP + diphosphate + H(+). It catalyses the reaction tRNA(Sec) + L-serine + ATP = L-seryl-tRNA(Sec) + AMP + diphosphate + H(+). The protein operates within aminoacyl-tRNA biosynthesis; selenocysteinyl-tRNA(Sec) biosynthesis; L-seryl-tRNA(Sec) from L-serine and tRNA(Sec): step 1/1. Functionally, catalyzes the attachment of serine to tRNA(Ser). Is also able to aminoacylate tRNA(Sec) with serine, to form the misacylated tRNA L-seryl-tRNA(Sec), which will be further converted into selenocysteinyl-tRNA(Sec). The chain is Serine--tRNA ligase from Rhizorhabdus wittichii (strain DSM 6014 / CCUG 31198 / JCM 15750 / NBRC 105917 / EY 4224 / RW1) (Sphingomonas wittichii).